The sequence spans 1155 residues: MKKNIFITSLLILLLLLSSCTGDTCIDPDDFGFITFNVSSRYNPGEITSRHEGDQVTPWRDSAYKVNGYPLTIMVRPWNYILGDKNTSGQLSAWCPWYGQKNNTTTLAPFCVKLQPCTFWDNARFDMCTPNPENRNDAMISNPPCIMTDGVGLYFLIAAKNTDPNISPDSQRRPQGITKHLGELTSSVGYEFYSISSTGQFLKAGGINYQYNGEDKSKYAQSPLYFKIIDKFYDDNSGQYRLVIKSGVSDTRPDPLQFLTDLIKKVLFGKDGMIKKTYQQIIDTPGYKISVSAILTLYIMFTVLSFLIGNINLTHVELIIRIFKISIISILLSTDKAWTFFHDYLFVFFIDGVQQILQIINEAAATGPGSQSLLGLLISTQTLSKLFSLLFVDWLGFIYIILYLIALYFIFFLIFKATIIYLTALITIGMIIIMGPIFICFMLFNITRSLFENWLRQLISYALQPIILFAGIAFISMIIRTEIYSTLGFGVCKHDFPNLGPINEIFGSFLEDIDPSLGNSIFYWWFPVPMKGGINNFHKAKILVPNDHIVVDASCKNDHDKCKHCAAYECIDERYIELPFLDLVKDSTRINNFINGKFVQLDGILLIFVSIYLLSKFNDTAVSTAQFIAGTSGNLTDIQKVNQQSYESLSQQINRPLNYVAQAVSAPVTSRISAGTEQASMFFAEKFENMMMERLEKQALSSSANKAVQNEVKRKYGIDSKDVKMNAIKDYEDGISGLLKNLPKRNELKVKELSQMKFIQLRDKISANKYDVQDYAALSKEQKTELDKLLKDANLRALASEANFTKDYQEAYKQAHQEMSGRGIGLFGKNIGVLRSWQEMEHRVNVKRKLKEEKRIGIGEKIYAGYTGIKRAALTKILGKDLRDAYEGNLTSAEWHDFEYNDPRLRTYSEKLKDDEKAREYEELRMHINKETIAVQADILSPEYLVKLEKAGRQSDVEYYQGLAQKQLIHDVHSRLFEEGEPVMMGDRFMREKATDSQMRDMIDNAHKKYAELIDVDRYTRRQEYYDIIHEKAKENLEQTYKELKDHFKSDNISIEEMPSLIAQKVKDTNTGSEIDKKITEEINNFNTDVKNYEYSTAVLNKIEDRKQAIMNEVNAQIDKINKYRASAKMEQYVKPILNEGRKLRTLEDHLKNMT.

The N-terminal stretch at 1–19 (MKKNIFITSLLILLLLLSS) is a signal peptide. The N-palmitoyl cysteine moiety is linked to residue C20. C20 carries the S-diacylglycerol cysteine lipid modification. A run of 4 helical transmembrane segments spans residues 289 to 309 (ISVS…FLIG), 395 to 415 (LGFI…FLIF), 424 to 444 (ALIT…FMLF), and 459 to 479 (ISYA…SMII).

It belongs to the TrbL/VirB6 family.

It localises to the cell membrane. This is an uncharacterized protein from Rickettsia prowazekii (strain Madrid E).